The following is a 472-amino-acid chain: MGKPKTLFNKIWQSHLVDVQDDGTCLIYIDRHLVHEVTSPQAFEGLRMTGRKVRRPEQTLAVADHNVPTTDRSKGIADEESRIQVEALGSNTAEFGVPYLEMDDIRQGIVHIVGPEQGFTLPGATIVCGDSHTSTHGAFGALAFGIGTSEVEHVLATQTLLQKPAKDMLVRIDGALRPGVSAKDIVLAVIGRIGTAGGTGHVIEFAGEAIRGLSMEGRMTVCNMTIEGGARAGLIAPDEVTFEYLKGRPFAPKGAAWEAAISYWKTLKTDEGAVYDTVIEMDAGAIEPQVTWGTSPENVVALSGRVPDPAAEADPGRRAAIERALAYMDLKPGMPMTEVAIDKVFIGSCTNGRIEDLRAAAAIAKGRKVAATVNAIVVPGSGLVKEQAESEGLDQIFLEAGFEWREPGCSMCLAMNADKLAPGERCASTSNRNFEGRQGKGGRTHLVSPAVAVASAITGKLTDAQSLAPSLG.

Residues Cys-349, Cys-409, and Cys-412 each coordinate [4Fe-4S] cluster.

This sequence belongs to the aconitase/IPM isomerase family. LeuC type 1 subfamily. Heterodimer of LeuC and LeuD. It depends on [4Fe-4S] cluster as a cofactor.

The enzyme catalyses (2R,3S)-3-isopropylmalate = (2S)-2-isopropylmalate. It functions in the pathway amino-acid biosynthesis; L-leucine biosynthesis; L-leucine from 3-methyl-2-oxobutanoate: step 2/4. Functionally, catalyzes the isomerization between 2-isopropylmalate and 3-isopropylmalate, via the formation of 2-isopropylmaleate. This is 3-isopropylmalate dehydratase large subunit from Rhodospirillum rubrum (strain ATCC 11170 / ATH 1.1.1 / DSM 467 / LMG 4362 / NCIMB 8255 / S1).